Consider the following 517-residue polypeptide: MDSRVLGALAALLAAAAAWVMRAAAEWLWWRPRRLERSLRSQGVDGNLYRFLNGDLKETVRLTKEARAQPISPPSHRFLHRINPLLLRAISHHGKFALTWIGPTPRVSIMDPELVREVLSNKFGHFAKPKAAPIVKLLATGLANYEGEKWVRHRRIINPAFHLEKLKRMLPAFFSCCSELIGRWESLVGCDESREVDVWPELQNLTGDVISRTAFGSSYAEGRRIFQLQSEQAELLIQAVQTVYIPGYRFLPTPKNIRRTKIDKEVRALLRSIIEKRENAMKMGDVHDDLLGLLMEYNLKESEHFNSKNIGMTTEDVIEECKLFYFAGQETTSVLLTWTMILLGMHPSWQDRAREEVSQVFGKNKPDFDGLSRLKTVTMILYEVLRLYPPIIFLTRRTYKPMMLGGITFPPEVQLALPIIFIHHDPEFWGEDAEEFNPDRFADGVSKASKNQMAFFPFGWGPRICIGQGFAMLEAKMGLSMILQRFSFELSPNYSHAPHTKITLQPQHGAQMVLHRL.

The helical transmembrane segment at 5-25 (VLGALAALLAAAAAWVMRAAA) threads the bilayer. Cys-465 lines the heme pocket.

Belongs to the cytochrome P450 family. As to expression, mainly expressed in leaves and, at low levels, in roots, fruits and stems.

It is found in the membrane. It functions in the pathway steroid metabolism; cholesterol metabolism. Its function is as follows. Involved in the biosynthesis of spiroketal steroid and saponin natural products from cholesterol such as diosgenin and analogs (e.g. furostanol and spirostanol), plant defense compounds used as main precursors for the industrial production of steroid hormones. During the 5,6-spiroketalization of cholesterol, may catalyze the 27-monohydroxylation of furostanol-type steroid to an intermediate product that undergoes a stereospecific formation of the terminal heterocycle to yield diosgenin. This is Cytochrome P450 CYP72A616 from Paris polyphylla (Daiswa polyphylla).